The primary structure comprises 153 residues: NADH dehydrogenase [ubiquinone] 1 beta subcomplex subunit 11, mitochondrial (153 aa).

A mitochondrion-targeting transit peptide spans 1 to 29 (MAAGLFGLSARRLLAAAATRGLPAARVRW). The segment at 49–72 (PEPTTQWQEDLDPEDENLYEKNPD) is disordered. The chain crosses the membrane as a helical span at residues 89–109 (LVFFFGVSIILVLGSTFVAYL).

It belongs to the complex I NDUFB11 subunit family. In terms of assembly, complex I is composed of 45 different subunits. Interacts with BCAP31.

Its subcellular location is the mitochondrion inner membrane. Accessory subunit of the mitochondrial membrane respiratory chain NADH dehydrogenase (Complex I), that is believed not to be involved in catalysis. Complex I functions in the transfer of electrons from NADH to the respiratory chain. The immediate electron acceptor for the enzyme is believed to be ubiquinone. The sequence is that of NADH dehydrogenase [ubiquinone] 1 beta subcomplex subunit 11, mitochondrial (NDUFB11) from Pongo pygmaeus (Bornean orangutan).